A 117-amino-acid chain; its full sequence is UPF0344 protein GK0697 (117 aa).

A run of 4 helical transmembrane segments spans residues 1–21, 39–59, 60–80, and 97–117; these read MTHA…LAVS, LFYI…ASIS, ALYW…EMVL, and VIAL…FDLF.

The protein belongs to the UPF0344 family.

The protein resides in the cell membrane. In Geobacillus kaustophilus (strain HTA426), this protein is UPF0344 protein GK0697.